Reading from the N-terminus, the 156-residue chain is Small ribosomal subunit protein uS7 (156 aa).

It belongs to the universal ribosomal protein uS7 family. In terms of assembly, part of the 30S ribosomal subunit. Contacts proteins S9 and S11.

Functionally, one of the primary rRNA binding proteins, it binds directly to 16S rRNA where it nucleates assembly of the head domain of the 30S subunit. Is located at the subunit interface close to the decoding center, probably blocks exit of the E-site tRNA. The polypeptide is Small ribosomal subunit protein uS7 (Thermoanaerobacter sp. (strain X514)).